The chain runs to 2618 residues: Mediator of RNA polymerase II transcription subunit 13 (2618 aa).

Composition is skewed to low complexity over residues 232–255 (FAAASSPPGSNGSAASAGGAVPNP), 509–519 (TPASGTGSLSA), and 532–543 (DSKQLVQQQIQQ). 10 disordered regions span residues 232–279 (FAAA…AAPP), 509–543 (TPASGTGSLSADGDENEQNKPPQDSKQLVQQQIQQ), 569–731 (GNTP…SGGP), 916–957 (LNIK…AEGL), 970–995 (TSSNDECSSVQIHTPPDSNNPSNGGC), 1036–1055 (TKMFPTPPSHEQQHPNSSPC), 1268–1384 (PRTP…TGVV), 1521–1557 (ASASMPGAGSGHGHGPNGGSNSSSCTPPSSNPHITGY), 1614–1633 (SRKNQNKQGPGETSSALDKI), and 1985–2060 (KTLL…GETK). Phosphothreonine is present on residues Thr571 and Thr575. Polar residues-rich tracts occupy residues 581–590 (STYSRNSLGG), 634–643 (APTSVSNLQQ), and 669–681 (SITASPYVHQTPS). The span at 692–706 (AGGGPAGGQGLGTGP) shows a compositional bias: gly residues. Positions 711–723 (AQQPATPTAATSA) are enriched in low complexity. Over residues 939-949 (NSSGGGSGSGG) the composition is skewed to gly residues. Residues 1272-1295 (LTPSTVPQPLSSGGSQYLLNQLNC) are compositionally biased toward polar residues. Gly residues-rich tracts occupy residues 1375 to 1384 (GLGGGATGVV) and 1528 to 1538 (AGSGHGHGPNG). Positions 1539 to 1553 (GSNSSSCTPPSSNPH) are enriched in low complexity. Over residues 1614-1629 (SRKNQNKQGPGETSSA) the composition is skewed to polar residues. Over residues 1993–2014 (GSGNSHSKGGSSCSSNSSSVSG) the composition is skewed to low complexity. 2 positions are modified to phosphoserine: Ser2472 and Ser2475.

The protein belongs to the Mediator complex subunit 13 family. As to quaternary structure, component of the Cdk8 module of the Mediator complex, composed of CycC, Cdk8, kto and skd.

The protein resides in the nucleus. Its function is as follows. Component of the Mediator complex, a coactivator involved in the regulated transcription of nearly all RNA polymerase II-dependent genes. Mediator functions as a bridge to convey information from gene-specific regulatory proteins to the basal RNA polymerase II transcription machinery. Mediator is recruited to promoters by direct interactions with regulatory proteins and serves as a scaffold for the assembly of a functional preinitiation complex with RNA polymerase II and the general transcription factors. Required for leg and eye development and macrochaete specification or differentiation. Negatively regulates sex comb development. Required for activated transcription of the MtnB and MtnD genes. The protein is Mediator of RNA polymerase II transcription subunit 13 (skd) of Drosophila melanogaster (Fruit fly).